We begin with the raw amino-acid sequence, 298 residues long: Acetylglutamate kinase (298 aa).

Substrate contacts are provided by residues 69–70 (GG), arginine 91, and asparagine 196.

It belongs to the acetylglutamate kinase family. ArgB subfamily.

Its subcellular location is the cytoplasm. The enzyme catalyses N-acetyl-L-glutamate + ATP = N-acetyl-L-glutamyl 5-phosphate + ADP. Its pathway is amino-acid biosynthesis; L-arginine biosynthesis; N(2)-acetyl-L-ornithine from L-glutamate: step 2/4. Catalyzes the ATP-dependent phosphorylation of N-acetyl-L-glutamate. The sequence is that of Acetylglutamate kinase from Rhodopseudomonas palustris (strain BisA53).